A 122-amino-acid polypeptide reads, in one-letter code: MIGKHCILELCECNSVKLDDEAFIRTTIQMASKVAGAQLLNLITHKFVPQGVTGLALLAESHISIHTWPESGYAAVDVFTCGDQTMPDKACQLLVEELQSKRHSLKTLRRDTPVMISNALIN.

The Schiff-base intermediate with substrate; via pyruvic acid role is filled by Ser-61. Ser-61 is subject to Pyruvic acid (Ser); by autocatalysis. Catalysis depends on His-66, which acts as the Proton acceptor; for processing activity. Residue Cys-81 is the Proton donor; for catalytic activity of the active site.

Belongs to the prokaryotic AdoMetDC family. Type 1 subfamily. In terms of assembly, heterotetramer of two alpha and two beta chains arranged as a dimer of alpha/beta heterodimers. Pyruvate serves as cofactor. Is synthesized initially as an inactive proenzyme. Formation of the active enzyme involves a self-maturation process in which the active site pyruvoyl group is generated from an internal serine residue via an autocatalytic post-translational modification. Two non-identical subunits are generated from the proenzyme in this reaction, and the pyruvate is formed at the N-terminus of the alpha chain, which is derived from the carboxyl end of the proenzyme. The post-translation cleavage follows an unusual pathway, termed non-hydrolytic serinolysis, in which the side chain hydroxyl group of the serine supplies its oxygen atom to form the C-terminus of the beta chain, while the remainder of the serine residue undergoes an oxidative deamination to produce ammonia and the pyruvoyl group blocking the N-terminus of the alpha chain.

It catalyses the reaction S-adenosyl-L-methionine + H(+) = S-adenosyl 3-(methylsulfanyl)propylamine + CO2. It participates in amine and polyamine biosynthesis; S-adenosylmethioninamine biosynthesis; S-adenosylmethioninamine from S-adenosyl-L-methionine: step 1/1. Functionally, catalyzes the decarboxylation of S-adenosylmethionine to S-adenosylmethioninamine (dcAdoMet), the propylamine donor required for the synthesis of the polyamines spermine and spermidine from the diamine putrescine. This chain is S-adenosylmethionine decarboxylase proenzyme, found in Prochlorococcus marinus (strain MIT 9211).